The sequence spans 361 residues: Chorismate synthase (361 aa).

The interval threonine 37–arginine 59 is disordered. The span at aspartate 40–arginine 49 shows a compositional bias: basic and acidic residues. The NADP(+) site is built by arginine 48 and arginine 54. FMN is bound by residues arginine 125 to serine 127, asparagine 238 to alanine 239, glycine 278, lysine 293 to serine 297, and arginine 319.

This sequence belongs to the chorismate synthase family. Homotetramer. FMNH2 serves as cofactor.

The catalysed reaction is 5-O-(1-carboxyvinyl)-3-phosphoshikimate = chorismate + phosphate. The protein operates within metabolic intermediate biosynthesis; chorismate biosynthesis; chorismate from D-erythrose 4-phosphate and phosphoenolpyruvate: step 7/7. Catalyzes the anti-1,4-elimination of the C-3 phosphate and the C-6 proR hydrogen from 5-enolpyruvylshikimate-3-phosphate (EPSP) to yield chorismate, which is the branch point compound that serves as the starting substrate for the three terminal pathways of aromatic amino acid biosynthesis. This reaction introduces a second double bond into the aromatic ring system. In Serratia proteamaculans (strain 568), this protein is Chorismate synthase.